Consider the following 308-residue polypeptide: Cell division protein FtsX (308 aa).

At 1–24 (MISRFFRHLFEALKSLKRNGWMTV) the chain is on the extracellular side. Residues 25–45 (AAVSSVMITLTLVAIFASVIF) form a helical membrane-spanning segment. The Cytoplasmic portion of the chain corresponds to 46–178 (NTAKLATDIE…NTERLFKLAS (133 aa)). A helical transmembrane segment spans residues 179 to 199 (FIRVWGLGIAALLIFIAAFLI). The Extracellular segment spans residues 200 to 236 (SNTIRITIISRSREIQIMRLVGAKNSYIRGPFLLEGA). Residues 237–257 (FIGLLGAIAPSVLVFIVYQIV) traverse the membrane as a helical segment. The Cytoplasmic portion of the chain corresponds to 258–276 (YQSVNKSLVGQNLSMISPD). A helical transmembrane segment spans residues 277 to 297 (LFSPLMIALLFVIGVFIGSLG). At 298–308 (SGISMRRFLKI) the chain is on the extracellular side.

This sequence belongs to the ABC-4 integral membrane protein family. FtsX subfamily. Interacts with FtsE. Interacts (via large extracellular loop) with PcsB (via N-terminal coiled coil domain). This interaction directs PcsB to equatorial and septal sites of dividing cells.

It is found in the cell membrane. Functionally, part of the ABC transporter FtsEX involved in asymmetric cellular division facilitating the initiation of sporulation. Required in maintaining normal growth and cellular morphology. This is Cell division protein FtsX from Streptococcus pneumoniae (strain ATCC BAA-255 / R6).